The primary structure comprises 157 residues: MKEIVLAGGCFWGVEEYMSRIEGIVETKVGYANGIKENPSYEEVCSGVTGHAEACYIKYDESIISLEELLNKFWSIIDPTVLNKQGNDRGTQYRTCIFYLDEKDLNVIIKSKYQEQKNYRKPIVTEVEPLKCFYEAEEYHQKYLKKNPGGYCHIHLD.

The active site involves Cys-10.

Belongs to the MsrA Met sulfoxide reductase family.

It carries out the reaction L-methionyl-[protein] + [thioredoxin]-disulfide + H2O = L-methionyl-(S)-S-oxide-[protein] + [thioredoxin]-dithiol. It catalyses the reaction [thioredoxin]-disulfide + L-methionine + H2O = L-methionine (S)-S-oxide + [thioredoxin]-dithiol. In terms of biological role, has an important function as a repair enzyme for proteins that have been inactivated by oxidation. Catalyzes the reversible oxidation-reduction of methionine sulfoxide in proteins to methionine. This chain is Peptide methionine sulfoxide reductase MsrA, found in Clostridium botulinum (strain Kyoto / Type A2).